The sequence spans 185 residues: Ribosome-recycling factor (185 aa).

The disordered stretch occupies residues 145–164 (DGEAGEDEVSRAEKDLDKTT).

This sequence belongs to the RRF family.

It localises to the cytoplasm. Responsible for the release of ribosomes from messenger RNA at the termination of protein biosynthesis. May increase the efficiency of translation by recycling ribosomes from one round of translation to another. This chain is Ribosome-recycling factor, found in Mycobacterium sp. (strain JLS).